Reading from the N-terminus, the 668-residue chain is Metastasis-associated protein MTA2 (668 aa).

A BAH domain is found at 1 to 144 (MAANMYRVGD…PVQKTLLADQ (144 aa)). Phosphoserine is present on residues Ser52 and Ser54. Positions 145 to 256 (GEIRVGCKFQ…KAMSTLVPQG (112 aa)) constitute an ELM2 domain. The residue at position 152 (Lys152) is an N6-acetyllysine. The SANT domain maps to 263–315 (DEMEEWSASEAMLFEEALEKYGKDFNDIRQDFLPWKSLASIVQFYYMWKTTDR). Residues 367-394 (CESCHTTQSAQWYAWGPPNMQCRLCASC) form a GATA-type; atypical zinc finger. The interval 412–437 (GAARGTTEPHSRGHLSRPEAQSLSPY) is disordered. Phosphoserine is present on residues Ser433 and Ser435. At Lys460 the chain carries N6-acetyllysine. Lys492 is covalently cross-linked (Glycyl lysine isopeptide (Lys-Gly) (interchain with G-Cter in SUMO2 and SUMO3); alternate). A Glycyl lysine isopeptide (Lys-Gly) (interchain with G-Cter in SUMO2); alternate cross-link involves residue Lys492. Lys508 participates in a covalent cross-link: Glycyl lysine isopeptide (Lys-Gly) (interchain with G-Cter in SUMO2). An N6-acetyllysine mark is found at Lys522 and Lys531. Residue Thr534 is modified to Phosphothreonine. Residues Lys559 and Lys595 each participate in a glycyl lysine isopeptide (Lys-Gly) (interchain with G-Cter in SUMO2) cross-link. 2 disordered regions span residues 580-599 (ASGI…LNPA) and 647-668 (PPVP…VLED).

Belongs to the metastasis-associated protein family. As to quaternary structure, component of the nucleosome remodeling and deacetylase (NuRD) repressor complex, composed of core proteins MTA1, MTA2, MTA3, RBBP4, RBBP7, HDAC1, HDAC2, MBD2, MBD3, and peripherally associated proteins CDK2AP1, CDK2AP2, GATAD2A, GATAD2B, CHD3, CHD4 and CHD5. The exact stoichiometry of the NuRD complex is unknown, and some subunits such as MBD2 and MBD3, GATAD2A and GATAD2B, and CHD3, CHD4 and CHD5 define mutually exclusive NuRD complexes. Interacts with CHD3. Interacts with CHD4. Interacts with GATAD2A. Interacts with HDAC7. Interacts with MBD3. Interacts with p53/TP53. Interacts with MINT. Interacts with PIMREG. Interacts with NACC2. Interacts with ERCC6. Interacts with PWWP2B. Interacts with transcription factor BCL11A.

It localises to the nucleus. Its function is as follows. May function as a transcriptional coregulator. Acts as a component of the histone deacetylase NuRD complex which participates in the remodeling of chromatin. The polypeptide is Metastasis-associated protein MTA2 (Mta2) (Mus musculus (Mouse)).